We begin with the raw amino-acid sequence, 395 residues long: uncharacterized protein (395 aa).

This sequence belongs to the UDP-glycosyltransferase family.

This is an uncharacterized protein from Bacillus subtilis (strain 168).